The chain runs to 176 residues: Parathyroid hormone-related protein (176 aa).

The signal sequence occupies residues 1 to 25 (MMFTKLFQQWSFAVFLLSYSVPSYG). Positions 26-37 (RSVEGISRRLKR) are excised as a propeptide. Residues 58-69 (RIFLQNLIEGVN) form an important for receptor binding region. The tract at residues 76 to 157 (TSEVSPNPKP…WLNSGMYGSN (82 aa)) is disordered. 2 stretches are compositionally biased toward polar residues: residues 77–91 (SEVS…NTKN) and 106–116 (TQETNKSQTYK). Residues 109–130 (TNKSQTYKEQPLKVSGKKKKAK) carry the Nuclear localization signal motif. Residues 123–133 (SGKKKKAKPGK) show a composition bias toward basic residues.

The protein belongs to the parathyroid hormone family.

It is found in the secreted. Its subcellular location is the cytoplasm. It localises to the nucleus. Its function is as follows. Neuroendocrine peptide which is a critical regulator of cellular and organ growth, development, migration, differentiation and survival and of epithelial calcium ion transport. Acts by binding to its receptor, PTH1R, activating G protein-coupled receptor signaling. Regulates endochondral bone development and epithelial-mesenchymal interactions during the formation of the mammary glands and teeth. Required for skeletal homeostasis. Functionally, potent inhibitor of osteoclastic bone resorption. The chain is Parathyroid hormone-related protein (PTHLH) from Gallus gallus (Chicken).